A 547-amino-acid polypeptide reads, in one-letter code: Delta-guaiene synthase 2 (547 aa).

Residues Asp-299, Asp-303, and Asp-444 each contribute to the Mg(2+) site. Residues 299 to 303 (DDTYD) carry the DDXXD motif motif.

It belongs to the terpene synthase family. Mg(2+) is required as a cofactor.

It catalyses the reaction (2E,6E)-farnesyl diphosphate = delta-guaiene + diphosphate. It carries out the reaction (2E,6E)-farnesyl diphosphate = alpha-guaiene + diphosphate. It participates in secondary metabolite biosynthesis; terpenoid biosynthesis. Sesquiterpene synthase involved in the biosynthesis of delta-guaiene (53.7%) and alpha-guaiene (44.6%), two structures composed of five- and seven-membered rings. Also produces 1.7% of alpha-humulene. The sequence is that of Delta-guaiene synthase 2 (C3) from Aquilaria crassna (Eagle wood).